Reading from the N-terminus, the 164-residue chain is Large ribosomal subunit protein uL10 (164 aa).

It belongs to the universal ribosomal protein uL10 family. Part of the ribosomal stalk of the 50S ribosomal subunit. The N-terminus interacts with L11 and the large rRNA to form the base of the stalk. The C-terminus forms an elongated spine to which L12 dimers bind in a sequential fashion forming a multimeric L10(L12)X complex.

Forms part of the ribosomal stalk, playing a central role in the interaction of the ribosome with GTP-bound translation factors. The chain is Large ribosomal subunit protein uL10 from Helicobacter pylori (strain P12).